The primary structure comprises 948 residues: Sensor histidine kinase RcsC (948 aa).

At 1–20 the chain is on the cytoplasmic side; the sequence is MKYLASFRTTLKVSRYLFRA. A helical transmembrane segment spans residues 21 to 41; the sequence is LALLIWLLIAFVSVFYIVNAL. Residues 42–313 lie on the Periplasmic side of the membrane; the sequence is HQRESEIRQE…PVDLVLERIR (272 aa). Residues 314–334 form a helical membrane-spanning segment; it reads ILILNAILLNVLVGAGLFTLA. Over 335-948 the chain is Cytoplasmic; the sequence is RMYERRIFIP…YAERVRKTRA (614 aa). Positions 357-425 constitute a PAS domain; sequence QFNRKIVASA…VLTSNNTNLQ (69 aa). Positions 476–692 constitute a Histidine kinase domain; it reads TVSHELRTPL…QFTLRIPLYG (217 aa). A Phosphohistidine; by autocatalysis modification is found at His-479. The 101-residue stretch at 705-805 folds into the ABL domain; that stretch reads AGTCCWLAVR…ARIYSIELDS (101 aa). The region spanning 826 to 940 is the Response regulatory domain; the sequence is MILVVDDHPI…ALKQTLAVYA (115 aa). Asp-875 bears the 4-aspartylphosphate mark.

It belongs to the RcsC family. As to quaternary structure, interacts with RcsD. Post-translationally, autophosphorylated. Activation probably requires a transfer of a phosphate group from a His in the transmitter domain to an Asp in the receiver domain.

The protein localises to the cell inner membrane. The catalysed reaction is ATP + protein L-histidine = ADP + protein N-phospho-L-histidine.. In terms of biological role, component of the Rcs signaling system, which controls transcription of numerous genes. RcsC functions as a membrane-associated protein kinase that phosphorylates RcsD in response to environmental signals. The phosphoryl group is then transferred to the response regulator RcsB. The protein is Sensor histidine kinase RcsC of Salmonella typhi.